The following is a 132-amino-acid chain: UPF0299 membrane protein YohJ (132 aa).

A run of 4 helical transmembrane segments spans residues 7-27, 31-51, 63-83, and 93-113; these read IIWQYLRAFVLIYACLYAGIF, LLPVTIPGSIIGMLILFVLLA, GCYVLIRYMALLFVPIGVGVM, and FGPVVVSCAVSTLVVFLVVSW.

It belongs to the UPF0299 family.

Its subcellular location is the cell inner membrane. The protein is UPF0299 membrane protein YohJ of Shigella boydii serotype 4 (strain Sb227).